A 721-amino-acid chain; its full sequence is Polyphosphate kinase (721 aa).

Asn47 contributes to the ATP binding site. Positions 377 and 407 each coordinate Mg(2+). His437 (phosphohistidine intermediate) is an active-site residue. 3 residues coordinate ATP: Tyr471, Arg567, and His595.

The protein belongs to the polyphosphate kinase 1 (PPK1) family. It depends on Mg(2+) as a cofactor. Post-translationally, an intermediate of this reaction is the autophosphorylated ppk in which a phosphate is covalently linked to a histidine residue through a N-P bond.

It catalyses the reaction [phosphate](n) + ATP = [phosphate](n+1) + ADP. Catalyzes the reversible transfer of the terminal phosphate of ATP to form a long-chain polyphosphate (polyP). This chain is Polyphosphate kinase, found in Exiguobacterium sp. (strain ATCC BAA-1283 / AT1b).